We begin with the raw amino-acid sequence, 799 residues long: Oxygen sensor protein DosP (799 aa).

A PAS 1 domain is found at 10–81 (ADGIFFPALE…YIRHNREGGK (72 aa)). Heme contacts are provided by H69 and M87. The PAS 2 domain occupies 134–207 (QTRQLIIAVD…LQQLLWKTAR (74 aa)). The PAC domain occupies 208 to 260 (DQDEFLLLTRTGEKIWIKASISPVYDVLAHLQNLVMTFSDITEERQIRQLEGN). One can recognise a GGDEF domain in the interval 402–532 (VSPVVYLIGV…GGNGWQFFSP (131 aa)). One can recognise an EAL domain in the interval 541 to 795 (RLVLGAALKE…EIPGWMSSVL (255 aa)).

Homodimer; has been previously suggested to be a homotetramer based on size exclusion chromatography. Forms a complex with DosC. The cofactor is heme. Mg(2+) serves as cofactor. Post-translationally, the heme distal ligand is coordinated by Met-87 in the active Fe(2+) (ferrous) form, by O(2) in the O(2)-bound form and by H(2)O in the inactive Fe(3+) (ferric) form.

It catalyses the reaction 3',3'-c-di-GMP + H2O = 5'-phosphoguanylyl(3'-&gt;5')guanosine + H(+). With respect to regulation, has c-di-GMP PDE activity in both Fe(2+) and Fe(3+)-bound forms; this activity is increased 6-7 fold by binding of O(2) and CO and NO. Has cAMP PDE activity only when the heme is in the Fe(2+) form. cAMP PDE activity is inhibited by oxidation of the heme iron and by binding of external ligands such as CO and NO. Also strongly inhibited by etazolate hydrochloride, a selective cAMP PDE inhibitor. PDE activity is inhibited in the absence of oxygen. Its function is as follows. Heme-based oxygen sensor protein displaying phosphodiesterase (PDE) activity toward c-di-GMP in response to oxygen availability. Involved in the modulation of intracellular c-di-GMP levels, in association with DosC which catalyzes the biosynthesis of c-di-GMP (diguanylate cyclase activity). Cyclic-di-GMP is a second messenger which controls cell surface-associated traits in bacteria. Has very poor PDE activity on cAMP but is not active with cGMP, bis(p-nitrophenyl) phosphate or p-nitrophenyl phosphate. Via its PDE activity on c-di-GMP, DosP regulates biofilm formation through the repression of transcription of the csgBAC operon, which encodes curli structural subunits. The chain is Oxygen sensor protein DosP (dosP) from Escherichia coli (strain K12).